The chain runs to 75 residues: DNA-directed RNA polymerase subunit Rpo5 (75 aa).

The protein belongs to the archaeal Rpo5/eukaryotic RPB5 RNA polymerase subunit family. Part of the RNA polymerase complex.

It is found in the cytoplasm. It carries out the reaction RNA(n) + a ribonucleoside 5'-triphosphate = RNA(n+1) + diphosphate. Its function is as follows. DNA-dependent RNA polymerase (RNAP) catalyzes the transcription of DNA into RNA using the four ribonucleoside triphosphates as substrates. This is DNA-directed RNA polymerase subunit Rpo5 from Halobacterium salinarum (strain ATCC 700922 / JCM 11081 / NRC-1) (Halobacterium halobium).